A 178-amino-acid polypeptide reads, in one-letter code: Ribosomal RNA small subunit methyltransferase G (178 aa).

Residues G54, L59, 105–106 (LE), and R120 contribute to the S-adenosyl-L-methionine site.

This sequence belongs to the methyltransferase superfamily. RNA methyltransferase RsmG family.

The protein resides in the cytoplasm. It catalyses the reaction guanosine(527) in 16S rRNA + S-adenosyl-L-methionine = N(7)-methylguanosine(527) in 16S rRNA + S-adenosyl-L-homocysteine. In terms of biological role, specifically methylates the N7 position of guanine in position 527 of 16S rRNA. In Helicobacter pylori (strain ATCC 700392 / 26695) (Campylobacter pylori), this protein is Ribosomal RNA small subunit methyltransferase G.